Reading from the N-terminus, the 80-residue chain is Teretoxin Tan6.1 (80 aa).

The first 21 residues, 1–21 (MATSGRLLCLCLVLGLVFESL), serve as a signal peptide directing secretion. A propeptide spanning residues 22 to 34 (GHPGARLPKDGKR) is cleaved from the precursor.

It belongs to the teretoxin M (TM) superfamily. Contains 3 disulfide bonds. In terms of tissue distribution, expressed by the venom duct.

It localises to the secreted. This is Teretoxin Tan6.1 from Terebra anilis (Auger snail).